A 362-amino-acid chain; its full sequence is Glutaminyl-peptide cyclotransferase (362 aa).

The N-terminal stretch at 1–35 is a signal peptide; that stretch reads MAGSEDKRVVGTLHLLLLQATVLSLTAGNLSLVSA. 2 N-linked (GlcNAc...) asparagine glycosylation sites follow: asparagine 29 and asparagine 50. A disulfide bridge links cysteine 140 with cysteine 165. Zn(2+) is bound at residue aspartate 160. Residue glutamate 202 is the Proton acceptor of the active site. Residue glutamate 203 coordinates Zn(2+). Aspartate 249 serves as the catalytic Proton acceptor. Histidine 331 is a Zn(2+) binding site.

The protein belongs to the glutaminyl-peptide cyclotransferase family.

The protein resides in the secreted. It catalyses the reaction N-terminal L-glutaminyl-[peptide] = N-terminal 5-oxo-L-prolyl-[peptide] + NH4(+). In terms of biological role, responsible for the biosynthesis of pyroglutamyl peptides. Has a bias against acidic and tryptophan residues adjacent to the N-terminal glutaminyl residue and a lack of importance of chain length after the second residue. The chain is Glutaminyl-peptide cyclotransferase (Qpct) from Mus musculus (Mouse).